Here is a 154-residue protein sequence, read N- to C-terminus: Large ribosomal subunit protein uL15 (154 aa).

The disordered stretch occupies residues 1–61 (MDLSTLKPVA…GGQMPLMRRM (61 aa)).

The protein belongs to the universal ribosomal protein uL15 family. As to quaternary structure, part of the 50S ribosomal subunit.

Its function is as follows. Binds to the 23S rRNA. In Oenococcus oeni (strain ATCC BAA-331 / PSU-1), this protein is Large ribosomal subunit protein uL15.